Here is a 528-residue protein sequence, read N- to C-terminus: Membrane protein insertase YidC (528 aa).

Helical transmembrane passes span 5–25 (VVIA…IFPP), 346–366 (YGIA…PLTH), 416–436 (LPMI…MFSI), and 486–506 (MLAL…GLVL).

Belongs to the OXA1/ALB3/YidC family. Type 1 subfamily. As to quaternary structure, interacts with the Sec translocase complex via SecD. Specifically interacts with transmembrane segments of nascent integral membrane proteins during membrane integration.

The protein localises to the cell inner membrane. Required for the insertion and/or proper folding and/or complex formation of integral membrane proteins into the membrane. Involved in integration of membrane proteins that insert both dependently and independently of the Sec translocase complex, as well as at least some lipoproteins. Aids folding of multispanning membrane proteins. This Geotalea uraniireducens (strain Rf4) (Geobacter uraniireducens) protein is Membrane protein insertase YidC.